A 147-amino-acid polypeptide reads, in one-letter code: Lipoprotein YfjS (147 aa).

The first 20 residues, 1–20, serve as a signal peptide directing secretion; it reads MKRKTLPLLALVATSLFLSA. The N-palmitoyl cysteine moiety is linked to residue C21. A lipid anchor (S-diacylglycerol cysteine) is attached at C21.

The protein to E.coli YafY.

Its subcellular location is the cell inner membrane. Does not induce degP when overexpressed unless it is mutated to resemble YafY. This chain is Lipoprotein YfjS (yfjS), found in Escherichia coli (strain K12).